A 40-amino-acid chain; its full sequence is Photosystem II reaction center protein J (40 aa).

Residues Ile8–Phe28 traverse the membrane as a helical segment.

The protein belongs to the PsbJ family. In terms of assembly, PSII is composed of 1 copy each of membrane proteins PsbA, PsbB, PsbC, PsbD, PsbE, PsbF, PsbH, PsbI, PsbJ, PsbK, PsbL, PsbM, PsbT, PsbX, PsbY, PsbZ, Psb30/Ycf12, at least 3 peripheral proteins of the oxygen-evolving complex and a large number of cofactors. It forms dimeric complexes.

The protein localises to the plastid. It localises to the chloroplast thylakoid membrane. Its function is as follows. One of the components of the core complex of photosystem II (PSII). PSII is a light-driven water:plastoquinone oxidoreductase that uses light energy to abstract electrons from H(2)O, generating O(2) and a proton gradient subsequently used for ATP formation. It consists of a core antenna complex that captures photons, and an electron transfer chain that converts photonic excitation into a charge separation. This Eucalyptus globulus subsp. globulus (Tasmanian blue gum) protein is Photosystem II reaction center protein J.